We begin with the raw amino-acid sequence, 347 residues long: L-threonine 3-dehydrogenase (347 aa).

Position 43 (Cys-43) interacts with Zn(2+). Active-site charge relay system residues include Thr-45 and His-48. Zn(2+) contacts are provided by His-68, Glu-69, Cys-98, Cys-101, Cys-104, and Cys-112. Residues Ile-180, Asp-200, Arg-205, Leu-267–Leu-269, and Ile-292–Thr-293 contribute to the NAD(+) site.

This sequence belongs to the zinc-containing alcohol dehydrogenase family. In terms of assembly, homotetramer. Zn(2+) is required as a cofactor.

It localises to the cytoplasm. It catalyses the reaction L-threonine + NAD(+) = (2S)-2-amino-3-oxobutanoate + NADH + H(+). It functions in the pathway amino-acid degradation; L-threonine degradation via oxydo-reductase pathway; glycine from L-threonine: step 1/2. In terms of biological role, catalyzes the NAD(+)-dependent oxidation of L-threonine to 2-amino-3-ketobutyrate. This chain is L-threonine 3-dehydrogenase, found in Bacillus subtilis (strain 168).